The chain runs to 502 residues: ATP synthase subunit alpha (502 aa).

169–176 contacts ATP; the sequence is GDRQTGKT.

This sequence belongs to the ATPase alpha/beta chains family. In terms of assembly, F-type ATPases have 2 components, CF(1) - the catalytic core - and CF(0) - the membrane proton channel. CF(1) has five subunits: alpha(3), beta(3), gamma(1), delta(1), epsilon(1). CF(0) has three main subunits: a(1), b(2) and c(9-12). The alpha and beta chains form an alternating ring which encloses part of the gamma chain. CF(1) is attached to CF(0) by a central stalk formed by the gamma and epsilon chains, while a peripheral stalk is formed by the delta and b chains.

It is found in the cell membrane. It catalyses the reaction ATP + H2O + 4 H(+)(in) = ADP + phosphate + 5 H(+)(out). In terms of biological role, produces ATP from ADP in the presence of a proton gradient across the membrane. The alpha chain is a regulatory subunit. The polypeptide is ATP synthase subunit alpha (Bacillus pumilus (strain SAFR-032)).